Here is a 917-residue protein sequence, read N- to C-terminus: MATEKGHGRDDEERVPLTRGSTEFRNSIDSFDYSSSTASLSLAVIDRINNSTQDAALGEKGPRDDDDDRYWDDDVEYDVEDADYIPSGGKPMHKSVKIALWTLLFLSLGGWSLAFVLFIFRSHDTYETPISSEDNISSGGLRGDRITLDDVLGEEWMPRHHFISWFPGPNGEDGLLLEKDGLGSTGYLRVEDIVSRKDTKSSKGSIVLMQKNTFTVGGETVICSQVWPSPDLKTVLVLSEKKQNWRHSFTGKYWLFDVDTQTGQPLDPAAQDQRIQLASWSPQSDAVVFTRDNNMFLRKLSSKEVTTITSDGGVDLFYGVPDWVYEEEVFSGNSATWWAHDGNYIAFLRTNESAVPEYPVQYFVSRPSGEDPNLGEENYPEVREIKYPKAGAPNPIVDLQFYDVRKGEIFSVDVADRFPDDYRLIIEVLWASNGKILVRETNRESDILIIAAIDVLSRTGKIVRKEDINALDGGWVEPTQSTRFIPADPSNGRPEDGYIDTVIHEGRDQLAYFTPLDNPKPLILTKGPSEIVNSPSGVDLKRGLVYFVVAGNEPWERHVYSVKFDGTALQPVTNVSESSYYDVSFSDGAGYALLNFQGPKVPWQKVISTPANENPFEEIIEQNNHLSRKLRLFSLESKVFQYINIDGFSLPVLERRPPNFDPTKKYPVLFYLYGGPGSQTVDKKFRVDFQSYVASTLGYIVVTVDGRGTGYIGRKSRSIVRGKLGHYEARDQIEVAKKWAAKPYVDESRMAIWGWSYGGFMTLKTIEEDGGRTFQYGMAVAPVTDWRYYDSIYAERYMHTPQHNPQGYDSSAISNTTALANNVRFLVMHGTADDNVHIQNTLTLLDKLDLANVDNYDVHVFPDSNHNINFHNAHKIVYTRLADWLVNAFNGQWLKTNNPTPNDSLFRRAATWAGLSI.

Positions Met1–Pro16 are enriched in basic and acidic residues. Residues Met1–Ser21 are disordered. The Cytoplasmic segment spans residues Met1–Ala99. A helical; Signal-anchor for type II membrane protein transmembrane segment spans residues Leu100 to Phe120. At Arg121 to Ile917 the chain is on the vacuolar side. N-linked (GlcNAc...) asparagine glycosylation is found at Asn135, Asn351, and Asn574. Ser756 functions as the Charge relay system in the catalytic mechanism. Asn815 is a glycosylation site (N-linked (GlcNAc...) asparagine). Residues Asp833 and His866 each act as charge relay system in the active site. N-linked (GlcNAc...) asparagine glycosylation is present at Asn902.

The protein belongs to the peptidase S9B family.

The protein resides in the vacuole membrane. It carries out the reaction Release of an N-terminal dipeptide, Xaa-Yaa-|-Zaa-, from a polypeptide, preferentially when Yaa is Pro, provided Zaa is neither Pro nor hydroxyproline.. Its function is as follows. Type IV dipeptidyl-peptidase which removes N-terminal dipeptides sequentially from polypeptides having unsubstituted N-termini provided that the penultimate residue is proline. The protein is Probable dipeptidyl-aminopeptidase B (DAPB) of Ajellomyces capsulatus (strain H88) (Darling's disease fungus).